The sequence spans 492 residues: ATP synthase subunit beta, chloroplastic (492 aa).

170 to 177 contributes to the ATP binding site; that stretch reads GGAGVGKT.

The protein belongs to the ATPase alpha/beta chains family. F-type ATPases have 2 components, CF(1) - the catalytic core - and CF(0) - the membrane proton channel. CF(1) has five subunits: alpha(3), beta(3), gamma(1), delta(1), epsilon(1). CF(0) has four main subunits: a(1), b(1), b'(1) and c(9-12).

The protein resides in the plastid. Its subcellular location is the chloroplast thylakoid membrane. It carries out the reaction ATP + H2O + 4 H(+)(in) = ADP + phosphate + 5 H(+)(out). Its function is as follows. Produces ATP from ADP in the presence of a proton gradient across the membrane. The catalytic sites are hosted primarily by the beta subunits. The protein is ATP synthase subunit beta, chloroplastic of Angiopteris evecta (Mule's foot fern).